The sequence spans 256 residues: tRNA-cytidine(32) 2-sulfurtransferase (256 aa).

The short motif at 35 to 40 is the PP-loop motif element; the sequence is SGGKDS. Residues C110, C113, and C201 each contribute to the [4Fe-4S] cluster site.

Belongs to the TtcA family. In terms of assembly, homodimer. Mg(2+) is required as a cofactor. [4Fe-4S] cluster serves as cofactor.

The protein resides in the cytoplasm. The enzyme catalyses cytidine(32) in tRNA + S-sulfanyl-L-cysteinyl-[cysteine desulfurase] + AH2 + ATP = 2-thiocytidine(32) in tRNA + L-cysteinyl-[cysteine desulfurase] + A + AMP + diphosphate + H(+). Its pathway is tRNA modification. Functionally, catalyzes the ATP-dependent 2-thiolation of cytidine in position 32 of tRNA, to form 2-thiocytidine (s(2)C32). The sulfur atoms are provided by the cysteine/cysteine desulfurase (IscS) system. The sequence is that of tRNA-cytidine(32) 2-sulfurtransferase from Coxiella burnetii (strain RSA 493 / Nine Mile phase I).